The chain runs to 108 residues: Nucleoid-associated protein BH02310 (108 aa).

This sequence belongs to the YbaB/EbfC family. In terms of assembly, homodimer.

Its subcellular location is the cytoplasm. It localises to the nucleoid. Functionally, binds to DNA and alters its conformation. May be involved in regulation of gene expression, nucleoid organization and DNA protection. The chain is Nucleoid-associated protein BH02310 from Bartonella henselae (strain ATCC 49882 / DSM 28221 / CCUG 30454 / Houston 1) (Rochalimaea henselae).